Consider the following 687-residue polypeptide: DNA-directed RNA polymerase subunit beta' (687 aa).

Residues C69, C71, C87, and C90 each coordinate Zn(2+). Residues D493, D495, and D497 each coordinate Mg(2+).

This sequence belongs to the RNA polymerase beta' chain family. RpoC1 subfamily. As to quaternary structure, in plastids the minimal PEP RNA polymerase catalytic core is composed of four subunits: alpha, beta, beta', and beta''. When a (nuclear-encoded) sigma factor is associated with the core the holoenzyme is formed, which can initiate transcription. It depends on Mg(2+) as a cofactor. The cofactor is Zn(2+).

It localises to the plastid. It is found in the chloroplast. The catalysed reaction is RNA(n) + a ribonucleoside 5'-triphosphate = RNA(n+1) + diphosphate. In terms of biological role, DNA-dependent RNA polymerase catalyzes the transcription of DNA into RNA using the four ribonucleoside triphosphates as substrates. The protein is DNA-directed RNA polymerase subunit beta' of Angiopteris evecta (Mule's foot fern).